Consider the following 232-residue polypeptide: U2 small nuclear ribonucleoprotein B'' (232 aa).

The RRM 1 domain occupies Gln-10–Ala-89. The segment at Thr-100–Asn-157 is disordered. Residues Arg-108–Gln-122 are compositionally biased toward basic and acidic residues. 2 stretches are compositionally biased toward polar residues: residues Arg-123–Asn-139 and Phe-146–Pro-156. An RRM 2 domain is found at Asn-158–Lys-232.

Belongs to the RRM U1 A/B'' family. In terms of assembly, component of the spliceosome where it is associated with snRNP U2.

The protein localises to the nucleus. Its subcellular location is the cajal body. The protein resides in the nucleoplasm. It localises to the cytoplasm. Its function is as follows. Involved in nuclear pre-mRNA splicing. The chain is U2 small nuclear ribonucleoprotein B'' (U2B'') from Arabidopsis thaliana (Mouse-ear cress).